The following is a 1014-amino-acid chain: Regulator of telomere elongation helicase 1 homolog (1014 aa).

Residues 7 to 308 (RGVDVDFPYD…NSADKQFDPE (302 aa)) form the Helicase ATP-binding domain. 42 to 49 (SPTGTGKT) contributes to the ATP binding site. Gly residues predominate over residues 70 to 85 (GGGGGGGGGGGGGGGS). The disordered stretch occupies residues 70–106 (GGGGGGGGGGGGGGGSQQPPYGSQPSGSQHSGGSASQ). A compositionally biased stretch (low complexity) spans 86–106 (QQPPYGSQPSGSQHSGGSASQ). C149, C170, C175, and C211 together coordinate [4Fe-4S] cluster. The short motif at 255 to 258 (DEAH) is the DEAH box element. The disordered stretch occupies residues 906–930 (SSKKSNITHAPGNSGAIHEKSGGQE).

The protein belongs to the helicase family. RAD3/XPD subfamily.

The protein resides in the nucleus. The catalysed reaction is ATP + H2O = ADP + phosphate + H(+). Its function is as follows. A probable ATP-dependent DNA helicase implicated in DNA replication, DNA repair and the maintenance of genomic stability. Acts as an anti-recombinase to counteract toxic recombination and limit crossover during meiosis. Regulates meiotic recombination and crossover homeostasis by physically dissociating strand invasion events and thereby promotes noncrossover repair by meiotic synthesis dependent strand annealing (SDSA) as well as disassembly of D loop recombination intermediates. The protein is Regulator of telomere elongation helicase 1 homolog of Oryza sativa subsp. japonica (Rice).